A 92-amino-acid chain; its full sequence is Small ribosomal subunit protein uS19c (92 aa).

It belongs to the universal ribosomal protein uS19 family.

It localises to the plastid. It is found in the chloroplast. Its function is as follows. Protein S19 forms a complex with S13 that binds strongly to the 16S ribosomal RNA. The polypeptide is Small ribosomal subunit protein uS19c (Lobularia maritima (Sweet alyssum)).